The chain runs to 144 residues: Gonadotropin subunit beta-2 (144 aa).

The N-terminal stretch at 1–27 (MGTPVKILVVRNHILFSVVVLLAVAQS) is a signal peptide. 6 disulfide bridges follow: Cys-33/Cys-81, Cys-47/Cys-96, Cys-50/Cys-134, Cys-58/Cys-112, Cys-62/Cys-114, and Cys-117/Cys-124. N-linked (GlcNAc...) asparagine glycosylation occurs at Asn-37. A propeptide spanning residues 143 to 144 (VY) is cleaved from the precursor.

The protein belongs to the glycoprotein hormones subunit beta family. In terms of assembly, heterodimer of an alpha and a beta chain.

It is found in the secreted. Its function is as follows. Involved in gametogenesis and steroidogenesis. This is Gonadotropin subunit beta-2 (cgbb) from Cyprinus carpio (Common carp).